Consider the following 479-residue polypeptide: Phosphatidylinositol 4-kinase type 2-alpha (479 aa).

Position 1 is an N-acetylmethionine (M1). The interval 1 to 74 is disordered; that stretch reads MDETSPLVSP…ARGAAAQGQT (74 aa). Phosphoserine is present on residues S5, S9, S44, S47, and S51. Positions 31-45 are enriched in low complexity; that stretch reads VPGGAVRVAAAAGSG. Positions 53–66 are enriched in basic and acidic residues; it reads GHDRERQPLLDRAR. Residues 124 to 453 enclose the PI3K/PI4K catalytic domain; sequence CIFPERIYQG…VQMPPVIVET (330 aa). The segment at 130–136 is G-loop; sequence IYQGSSG. Residues 131-137 and K152 each bind ATP; that span reads YQGSSGS. The segment at 157–159 is important for substrate binding; the sequence is EPY. The important for interaction with membranes stretch occupies residues 165–178; sequence KWTKWLQKLCCPCC. 4 S-palmitoyl cysteine lipidation sites follow: C174, C175, C177, and C178. 261–264 is a binding site for ATP; sequence QLFV. The interval 268–276 is important for interaction with membranes; that stretch reads KDADYWLRR. Residues 305–313 form a catalytic loop region; it reads RNTDRGNDN. The tract at residues 344–364 is activation loop; that stretch reads AIDNGLAFPLKHPDSWRAYPF. Residue D346 coordinates ATP. The tract at residues 359–368 is important for interaction with membranes; that stretch reads WRAYPFYWAW. At S462 the chain carries Phosphoserine.

This sequence belongs to the PI3/PI4-kinase family. Type II PI4K subfamily. Associates with the BLOC-1 and the AP-3 complexes; the BLOC-1 complex is required for optimal binding of PI4K2A to the AP-3 complex. Interacts with BLOC1S5 and DTNBP1. Interacts with FOS; this interaction may enhance phosphatidylinositol phosphorylation activity. Interacts with ITCH. Interacts with ATG9A. Palmitoylated by ZDHHC3 and ZDHHC7 in the CCPCC motif. Palmitoylation is cholesterol-dependent, and required for TGN localization. In terms of processing, ubiquitinated by ITCH; this does not lead to proteasomal degradation. In terms of tissue distribution, widely expressed. Highest expression is observed in kidney, brain, heart, skeletal muscle, and placenta and lowest expression is observed in colon, thymus, and small intestine.

The protein resides in the golgi apparatus. It is found in the trans-Golgi network membrane. It localises to the membrane raft. The protein localises to the cell projection. Its subcellular location is the dendrite. The protein resides in the presynaptic cell membrane. It is found in the synapse. It localises to the synaptosome. The protein localises to the mitochondrion. Its subcellular location is the endosome. The protein resides in the endosome membrane. It is found in the cytoplasmic vesicle. It localises to the membrane. The protein localises to the cell membrane. Its subcellular location is the perikaryon. The protein resides in the neuron projection. It carries out the reaction a 1,2-diacyl-sn-glycero-3-phospho-(1D-myo-inositol) + ATP = a 1,2-diacyl-sn-glycero-3-phospho-(1D-myo-inositol 4-phosphate) + ADP + H(+). Functionally, membrane-bound phosphatidylinositol-4 kinase (PI4-kinase) that catalyzes the phosphorylation of phosphatidylinositol (PI) to phosphatidylinositol 4-phosphate (PI4P), a lipid that plays important roles in endocytosis, Golgi function, protein sorting and membrane trafficking and is required for prolonged survival of neurons. Besides, phosphorylation of phosphatidylinositol (PI) to phosphatidylinositol 4-phosphate (PI4P) is the first committed step in the generation of phosphatidylinositol 4,5-bisphosphate (PIP2), a precursor of the second messenger inositol 1,4,5-trisphosphate (InsP3). This chain is Phosphatidylinositol 4-kinase type 2-alpha (PI4K2A), found in Homo sapiens (Human).